Reading from the N-terminus, the 273-residue chain is DnaJ homolog subfamily C member 27 (273 aa).

Residues 1-18 form a required for interaction with MAPK1 region; it reads MEASMPKRKEPGKSLRIK. Residues 23–30, 71–75, and 134–137 each bind GTP; these read GNAEVGKS, DMAGD, and NKID. The J domain occupies 217–273; the sequence is DSWDMLGVKPGASRDEVNKAYRKLAVLLHPDKCVAPGSEDAFKAVVNARTALLKNIK.

Belongs to the small GTPase superfamily. Rab family. In terms of assembly, interacts directly with MAPK1 (wild-type and kinase-deficient forms). Interacts directly (in GTP-bound form) with MAP2K1 (wild-type and kinase-deficient forms).

Its subcellular location is the nucleus. Its function is as follows. GTPase which can activate the MEK/ERK pathway and induce cell transformation when overexpressed. May act as a nuclear scaffold for MAPK1, probably by association with MAPK1 nuclear export signal leading to enhanced ERK1/ERK2 signaling. The polypeptide is DnaJ homolog subfamily C member 27 (DNAJC27) (Bos taurus (Bovine)).